Here is a 90-residue protein sequence, read N- to C-terminus: uncharacterized protein (90 aa).

Residues 13 to 34 (APEGMGPHHAASSSHHSAQHHH) form a disordered region. A helical membrane pass occupies residues 52 to 72 (YKMWFLYALILALIFGVFMWW).

Its subcellular location is the host membrane. This is an uncharacterized protein from Invertebrate iridescent virus 3 (IIV-3).